Reading from the N-terminus, the 161-residue chain is Phosphopantetheine adenylyltransferase (161 aa).

Thr10 contributes to the substrate binding site. Residues 10–11 (TF) and His18 each bind ATP. 3 residues coordinate substrate: Lys42, Leu74, and Arg88. ATP-binding positions include 89-91 (GLR), Glu99, and 124-130 (NSFISST).

Belongs to the bacterial CoaD family. As to quaternary structure, homohexamer. It depends on Mg(2+) as a cofactor.

It is found in the cytoplasm. The enzyme catalyses (R)-4'-phosphopantetheine + ATP + H(+) = 3'-dephospho-CoA + diphosphate. The protein operates within cofactor biosynthesis; coenzyme A biosynthesis; CoA from (R)-pantothenate: step 4/5. Its function is as follows. Reversibly transfers an adenylyl group from ATP to 4'-phosphopantetheine, yielding dephospho-CoA (dPCoA) and pyrophosphate. In Photobacterium profundum (strain SS9), this protein is Phosphopantetheine adenylyltransferase.